The following is a 241-amino-acid chain: ATP synthase subunit a (241 aa).

5 helical membrane passes run 30 to 50 (GQVFLTSWILLGALLVFISFG), 91 to 111 (FIGTLFLFVFVSNWGGALIPW), 128 to 148 (INTTIALALLVSLSYFYAGLS), 193 to 213 (LVVGVLVFLVPLILPIPVMFL), and 214 to 234 (GLFTSAIQALIFATLAAYYIG).

This sequence belongs to the ATPase A chain family. F-type ATPases have 2 components, CF(1) - the catalytic core - and CF(0) - the membrane proton channel. CF(1) has five subunits: alpha(3), beta(3), gamma(1), delta(1), epsilon(1). CF(0) has four main subunits: a, b, b' and c.

The protein localises to the cellular thylakoid membrane. In terms of biological role, key component of the proton channel; it plays a direct role in the translocation of protons across the membrane. This Prochlorococcus marinus (strain AS9601) protein is ATP synthase subunit a.